The chain runs to 332 residues: Glycerol-3-phosphate dehydrogenase [NAD(P)+] (332 aa).

Positions 11, 30, and 108 each coordinate NADPH. Sn-glycerol 3-phosphate is bound by residues Lys108, Gly137, and Ser139. Ala141 serves as a coordination point for NADPH. Positions 192, 245, 255, 256, and 257 each coordinate sn-glycerol 3-phosphate. Residue Lys192 is the Proton acceptor of the active site. Residue Arg256 coordinates NADPH. The NADPH site is built by Val280 and Glu282.

It belongs to the NAD-dependent glycerol-3-phosphate dehydrogenase family.

It is found in the cytoplasm. It catalyses the reaction sn-glycerol 3-phosphate + NAD(+) = dihydroxyacetone phosphate + NADH + H(+). The enzyme catalyses sn-glycerol 3-phosphate + NADP(+) = dihydroxyacetone phosphate + NADPH + H(+). Its pathway is membrane lipid metabolism; glycerophospholipid metabolism. Catalyzes the reduction of the glycolytic intermediate dihydroxyacetone phosphate (DHAP) to sn-glycerol 3-phosphate (G3P), the key precursor for phospholipid synthesis. The chain is Glycerol-3-phosphate dehydrogenase [NAD(P)+] from Burkholderia cenocepacia (strain HI2424).